The sequence spans 810 residues: Plasminogen (810 aa).

An N-terminal signal peptide occupies residues M1–G19. One can recognise a PAN domain in the interval E20–V98. Intrachain disulfides connect C49–C73, C53–C61, C103–C181, C124–C164, C152–C176, C185–C262, C188–C316, C206–C245, C234–C257, C275–C352, C296–C335, and C324–C347. Kringle domains lie at C103–C181, E184–C262, and C275–C352. Residues Q125–T141 are compositionally biased toward polar residues. The disordered stretch occupies residues Q125–E145. Residues T136, D158, and R172 each coordinate L-lysine. T365 carries an O-linked (GalNAc...) threonine glycan. 9 cysteine pairs are disulfide-bonded: C377–C454, C398–C437, C426–C449, C481–C560, C502–C543, C531–C555, C567–C685, C577–C585, and C607–C623. Kringle domains are found at residues C377–C454 and C481–C560. The L-lysine site is built by D432 and R445. A Peptidase S1 domain is found at V581 to R808. S597 carries the post-translational modification Phosphoserine. Active-site charge relay system residues include H622 and D665. S688 is modified (phosphoserine). Disulfide bonds link C699-C766, C729-C745, and C756-C784. The active-site Charge relay system is S760.

Belongs to the peptidase S1 family. Plasminogen subfamily. As to quaternary structure, interacts with CSPG4 and AMOT. Interacts (via the Kringle domains) with HRG; the interaction tethers PLG to the cell surface and enhances its activation. Interacts (via Kringle 4 domain) with ADA; the interaction stimulates PLG activation when in complex with DPP4. Angiostatin: Interacts with ATP5F1A; the interaction inhibits most of the angiogenic effects of angiostatin. In the presence of the inhibitor, the activation involves only cleavage after Arg-580, yielding two chains held together by two disulfide bonds. In the absence of the inhibitor, the activation involves additionally the removal of the activation peptide.

The protein localises to the secreted. The enzyme catalyses Preferential cleavage: Lys-|-Xaa &gt; Arg-|-Xaa, higher selectivity than trypsin. Converts fibrin into soluble products.. Converted into plasmin by plasminogen activators, both plasminogen and its activator being bound to fibrin. Activated with catalytic amounts of streptokinase. In terms of biological role, plasmin dissolves the fibrin of blood clots and acts as a proteolytic factor in a variety of other processes including embryonic development, tissue remodeling, tumor invasion, and inflammation. In ovulation, weakens the walls of the Graafian follicle. It activates the urokinase-type plasminogen activator, collagenases and several complement zymogens, such as C1, C4 and C5. Cleavage of fibronectin and laminin leads to cell detachment and apoptosis. Also cleaves fibrin, thrombospondin and von Willebrand factor. Its role in tissue remodeling and tumor invasion may be modulated by CSPG4. Binds to cells. The protein is Plasminogen (PLG) of Macaca mulatta (Rhesus macaque).